Consider the following 157-residue polypeptide: Protein Smg (157 aa).

Belongs to the Smg family.

The chain is Protein Smg from Buchnera aphidicola subsp. Acyrthosiphon pisum (strain 5A).